Consider the following 481-residue polypeptide: Vanillin dehydrogenase (481 aa).

NAD(+) is bound at residue 228-233 (GSTHVG). Catalysis depends on residues glutamate 250 and cysteine 284.

This sequence belongs to the aldehyde dehydrogenase family.

The enzyme catalyses vanillin + NAD(+) + H2O = vanillate + NADH + 2 H(+). Its function is as follows. Catalyzes the NAD-dependent oxidation of vanillin to vanillic acid. The sequence is that of Vanillin dehydrogenase (vdh) from Pseudomonas sp. (strain HR199 / DSM 7063).